The chain runs to 424 residues: Glutamate-1-semialdehyde 2,1-aminomutase (424 aa).

An N6-(pyridoxal phosphate)lysine modification is found at lysine 265.

The protein belongs to the class-III pyridoxal-phosphate-dependent aminotransferase family. HemL subfamily. In terms of assembly, homodimer. Pyridoxal 5'-phosphate is required as a cofactor.

Its subcellular location is the cytoplasm. It catalyses the reaction (S)-4-amino-5-oxopentanoate = 5-aminolevulinate. It functions in the pathway porphyrin-containing compound metabolism; protoporphyrin-IX biosynthesis; 5-aminolevulinate from L-glutamyl-tRNA(Glu): step 2/2. This is Glutamate-1-semialdehyde 2,1-aminomutase from Alkaliphilus oremlandii (strain OhILAs) (Clostridium oremlandii (strain OhILAs)).